Reading from the N-terminus, the 233-residue chain is Orotidine 5'-phosphate decarboxylase (233 aa).

Substrate is bound by residues Asp11, Lys34, 61-70 (DLKLHDIPNT), Thr117, Arg179, Gln189, Gly209, and Arg210. Lys63 functions as the Proton donor in the catalytic mechanism.

The protein belongs to the OMP decarboxylase family. Type 1 subfamily. As to quaternary structure, homodimer.

The catalysed reaction is orotidine 5'-phosphate + H(+) = UMP + CO2. Its pathway is pyrimidine metabolism; UMP biosynthesis via de novo pathway; UMP from orotate: step 2/2. Its function is as follows. Catalyzes the decarboxylation of orotidine 5'-monophosphate (OMP) to uridine 5'-monophosphate (UMP). This Streptococcus agalactiae serotype Ia (strain ATCC 27591 / A909 / CDC SS700) protein is Orotidine 5'-phosphate decarboxylase.